We begin with the raw amino-acid sequence, 230 residues long: Type II restriction enzyme NlaIII (230 aa).

The catalysed reaction is Endonucleolytic cleavage of DNA to give specific double-stranded fragments with terminal 5'-phosphates.. Its function is as follows. A P subtype restriction enzyme that recognizes the double-stranded sequence 5'-CATG-3' and cleaves after G-4. In Neisseria lactamica, this protein is Type II restriction enzyme NlaIII (nlaIIIR).